A 124-amino-acid polypeptide reads, in one-letter code: Fluoride-specific ion channel FluC (124 aa).

4 helical membrane passes run V4–F24, F35–G55, I60–S80, and W95–L115. Na(+)-binding residues include G74 and T77.

Belongs to the fluoride channel Fluc/FEX (TC 1.A.43) family.

Its subcellular location is the cell inner membrane. It catalyses the reaction fluoride(in) = fluoride(out). Na(+) is not transported, but it plays an essential structural role and its presence is essential for fluoride channel function. Its function is as follows. Fluoride-specific ion channel. Important for reducing fluoride concentration in the cell, thus reducing its toxicity. This is Fluoride-specific ion channel FluC from Shewanella putrefaciens (strain CN-32 / ATCC BAA-453).